The following is a 628-amino-acid chain: 1-deoxy-D-xylulose-5-phosphate synthase (628 aa).

Thiamine diphosphate is bound by residues His72 and 113-115 (GHS). Asp144 serves as a coordination point for Mg(2+). Residues 145 to 146 (GA), Asn173, Tyr284, and Glu366 each bind thiamine diphosphate. Asn173 is a binding site for Mg(2+).

The protein belongs to the transketolase family. DXPS subfamily. Homodimer. Requires Mg(2+) as cofactor. It depends on thiamine diphosphate as a cofactor.

It catalyses the reaction D-glyceraldehyde 3-phosphate + pyruvate + H(+) = 1-deoxy-D-xylulose 5-phosphate + CO2. Its pathway is metabolic intermediate biosynthesis; 1-deoxy-D-xylulose 5-phosphate biosynthesis; 1-deoxy-D-xylulose 5-phosphate from D-glyceraldehyde 3-phosphate and pyruvate: step 1/1. Catalyzes the acyloin condensation reaction between C atoms 2 and 3 of pyruvate and glyceraldehyde 3-phosphate to yield 1-deoxy-D-xylulose-5-phosphate (DXP). The chain is 1-deoxy-D-xylulose-5-phosphate synthase from Shouchella clausii (strain KSM-K16) (Alkalihalobacillus clausii).